Reading from the N-terminus, the 100-residue chain is Toxin Rv0299 (100 aa).

Functionally, toxic component of a type II toxin-antitoxin (TA) system. Upon expression in M.smegmatis inhibits colony formation. Its toxic effect is neutralized by coexpression with cognate antitoxin Rv0298/MT0312. The polypeptide is Toxin Rv0299 (Mycobacterium tuberculosis (strain ATCC 25618 / H37Rv)).